Here is a 372-residue protein sequence, read N- to C-terminus: Alpha-1,3-mannosyl-glycoprotein 4-beta-N-acetylglucosaminyltransferase-like protein MGAT4D (372 aa).

Topologically, residues 1–8 (MKTKNVNL) are cytoplasmic. A helical; Signal-anchor for type II membrane protein membrane pass occupies residues 9–29 (LFALVAVLLFGFSCFCISRMN). The Lumenal segment spans residues 30 to 372 (QTNNQLINCR…REQHLKDHYY (343 aa)). N-linked (GlcNAc...) asparagine glycosylation is found at asparagine 54 and asparagine 143.

This sequence belongs to the glycosyltransferase 54 family. May self-associate; specifically in the endoplasmic reticulum prior to its translocation to the Golgi. Interacts with MGAT1, MGAT3 and MAN2A2; may interact with MGTA1 specifically in the Golgi. In terms of processing, N-glycosylated. O-glycosylated; further modified with terminal sialic acid residues. Testis.

Its subcellular location is the golgi apparatus membrane. It is found in the endoplasmic reticulum membrane. Functionally, may play a role in male spermatogenesis. In vitro acts as inhibitor of MGAT1 activity causing cell surface proteins to carry mainly high mannose N-glycans. The function is mediated by its lumenal domain and occurs specifically in the Golgi. A catalytic glucosyltransferase activity is not detected. May be involved in regulation of Sertoli-germ cell interactions during specific stages of spermatogenesis. The sequence is that of Alpha-1,3-mannosyl-glycoprotein 4-beta-N-acetylglucosaminyltransferase-like protein MGAT4D from Rattus norvegicus (Rat).